The following is a 438-amino-acid chain: UPF0597 protein YE0448 (438 aa).

The protein belongs to the UPF0597 family.

The sequence is that of UPF0597 protein YE0448 from Yersinia enterocolitica serotype O:8 / biotype 1B (strain NCTC 13174 / 8081).